The chain runs to 278 residues: UPF0761 membrane protein CBU_1578 (278 aa).

7 helical membrane-spanning segments follow: residues 38-58 (LLALVPLTIVAFTLLSFVPAF), 68-88 (LIWENFVPTSAGMVAAYLSQL), 92-112 (VTGLSIINIFFLGIVALLLMY), 134-154 (FLIYFMVLLLSPFLLGAVMLL), 177-197 (LLFVLPYVLIFITFTLFNWVL), 207-227 (AVIGGLVTTVLFELAKFAFTV), and 244-264 (VIPIFLVWLYVSWTIILLGAV).

Belongs to the UPF0761 family.

The protein resides in the cell inner membrane. The polypeptide is UPF0761 membrane protein CBU_1578 (Coxiella burnetii (strain RSA 493 / Nine Mile phase I)).